Reading from the N-terminus, the 158-residue chain is NAD(P)H-quinone oxidoreductase subunit N (158 aa).

It belongs to the complex I NdhN subunit family. As to quaternary structure, NDH-1 can be composed of about 15 different subunits; different subcomplexes with different compositions have been identified which probably have different functions.

It localises to the cellular thylakoid membrane. The enzyme catalyses a plastoquinone + NADH + (n+1) H(+)(in) = a plastoquinol + NAD(+) + n H(+)(out). It carries out the reaction a plastoquinone + NADPH + (n+1) H(+)(in) = a plastoquinol + NADP(+) + n H(+)(out). Functionally, NDH-1 shuttles electrons from an unknown electron donor, via FMN and iron-sulfur (Fe-S) centers, to quinones in the respiratory and/or the photosynthetic chain. The immediate electron acceptor for the enzyme in this species is believed to be plastoquinone. Couples the redox reaction to proton translocation, and thus conserves the redox energy in a proton gradient. Cyanobacterial NDH-1 also plays a role in inorganic carbon-concentration. This is NAD(P)H-quinone oxidoreductase subunit N from Crocosphaera subtropica (strain ATCC 51142 / BH68) (Cyanothece sp. (strain ATCC 51142)).